The sequence spans 1984 residues: MAMLPPPGPQSFVRFTKQSLALIEQRIAEGKTKEPKEEKKDDHDEGPKPSSDLEAGKQLPFIYGDIPAGMVSEPLEDLDPYYADKKTFIVLNKGKAIFRFNATPALYILSPFSPLRRISIKILVHSLFSMLIMCTILTNCIFMTMNNPAEWTKNVEYTFTGIYTFESLVKIFARGFCVGEFTFLRDPWNWLDFIVIVFAYLTEFVNLGNVSALRTFRVLRALKTISVIPGLKTIVGALIQSVKKLSDVIILTVFCLSVFALIGLQLFMGHLKHKCLRKIENETLESIMSSIESEEDYKKYFYYLEGSKDALLCGFSTDSGQCPEGYYCVKAGRNPDYGYTSFDTFSWAFLALFRLMTQDYWENLYQQTLRAAGKTYMIFFVVVIFLGSFYLINLILAVVAMAYEEQNQANIEEAKQKELEFQQMLDRLKKEQEEAEAIAAAAAEYTSIGRSRIMGLSESSSETSKLSSKSAKERRNRRKKKNQKKLSSGEEKGDDEKLSKSESEESISRKQFHLGVEGHRLAREKRLSAPNQSPLSIRGSLFSARRSSRTSLFSFKGRGKDIGSETEFADDEHSIFGDNESRRGSLFVPQRPQERRSSNLSQASRSPPMLQMNGKMHSAVDCNGVVSLVDGPSALMLPNGQLLPEVIIDKATSDDSGTTQIRKKRRSSSYLLSEDMLNDPHLRQRAMSRASILTNTVEELEESRQKCPSWWYRFAHTFLIWNCSPFWIKFKKFIYIIVMDPFVDLAITICIVLNTLFMAMEHHPMTEEFKNVLVVGNLVFTGIFAAEMVLKLIAMDPYEYFQVGWNVFDSLIVTLSLVELFLADVEGLSVLRSFRLLRVFKLAKSWPTLNMLIKIIGNSVGPLGNLTLVLAIIVFIFAVVGMQLFGKSYKECVCKINDDCSLPRWHMNDFFHSFLIVFRVLCGEWIETMWDCMEVAGQAMCLIVYMMVMVIGNLVVLNLFLALLLSSFSSDNLSAIEEDTDANNLQIAVTRIKKGINYVKQTLRELILKAFSKKPKISKEIRQAEDLNSKKENYISNRTLAEMSKDYNFHKEKDKISGFGSSMDKYLMEESDHQSFIHNPSLTVTVPIAPGESDLENMNTEELSSDSESEYSKERLNRSSSSECSTVDNALPGEGEEAEAEPVNSDEPEACFTDGCVRRFPCCQVSIESGKGKIWWNIRKTCYRIVEHSWFESFIVLMILLSSGALAFEDIYIEKKKTIKIILEYADKIFTYIFILEMLLKWVAYGYKTYFTNAWCWLDFLIVDVSLVTLVANTLGYSDLGPIKSLRTLRALRPLRALSRFEGMRVVVNALIGAIPSIMNVLLVCLIFWLIFSIMGVNLFAGKFYQCVNTTDDSRFPTKQVSNRSECFALMNGSQNVRWKNLKVNFDNVGLRYLSLLQVATFKGWMDIMYAAVDSVNVDQQPSYEHNLYMYIYFVIFIIFGSFFTLNLFIGVIIDNFNQQKKKLGGQDIFMTEEQKKYYNAMKKLGSKKPQKPIPRPGNKFQGCIFDLVTNQAFDITIMILICLNMVTMMVEKEGQSDYMTDVLYWINVVFIILFTGECVLKLISLRHYYFTIGWNIFDFVVVILSIVGMFLAELIETYFVSPTLFRVIRLARIGRILRLIKGAKGIRTLLFALMMSLPALFNIGLLLFLVMFIYAIFGMSNFAYVKKEAGINDMFNFETFGNSMICLFQITTSAGWDGLLAPILNSAPPDCDPKKVHPGSSTEGDCGSPSVGIFYFVSYIIISFLVVVNMYIAVILENFSVATEESTEPLSEDDFEMFYEVWEKFDPDATQFIEYSKLSDFAAALDPPLLIAKPNKVQLIAMDLPMVSGDRIHCLDILFAFTKRVLGESGEMDSLRSQMEERFMSANPSKVSYEPITTTLKRKQEDVSATVIQRAYRRYRLRQNVKNISSIYIKEGDKDDDLPNKGDIVFDNVNSSSPEKTDATASTISPPSYDSVTKPDKEKYEKDKTEKEDKGKDGKETKK.

Residues 1 to 125 lie on the Cytoplasmic side of the membrane; sequence MAMLPPPGPQ…RRISIKILVH (125 aa). The segment covering 26-47 has biased composition (basic and acidic residues); that stretch reads RIAEGKTKEPKEEKKDDHDEGP. Residues 26-55 form a disordered region; sequence RIAEGKTKEPKEEKKDDHDEGPKPSSDLEA. One copy of the I repeat lies at 112–408; the sequence is FSPLRRISIK…VAMAYEEQNQ (297 aa). Residues 126 to 145 form a helical membrane-spanning segment; sequence SLFSMLIMCTILTNCIFMTM. At 146–150 the chain is on the extracellular side; it reads NNPAE. Residues 151 to 172 form a helical membrane-spanning segment; sequence WTKNVEYTFTGIYTFESLVKIF. The Cytoplasmic segment spans residues 173 to 185; the sequence is ARGFCVGEFTFLR. A helical transmembrane segment spans residues 186 to 204; the sequence is DPWNWLDFIVIVFAYLTEF. Topologically, residues 205–210 are extracellular; it reads VNLGNV. Asparagine 209 carries an N-linked (GlcNAc...) asparagine glycan. Residues 211–227 traverse the membrane as a helical segment; it reads SALRTFRVLRALKTISV. The Cytoplasmic segment spans residues 228-241; sequence IPGLKTIVGALIQS. A helical membrane pass occupies residues 242 to 267; the sequence is VKKLSDVIILTVFCLSVFALIGLQLF. Over 268-344 the chain is Extracellular; sequence MGHLKHKCLR…PDYGYTSFDT (77 aa). A disulfide bridge links cysteine 275 with cysteine 322. Asparagine 281 carries an N-linked (GlcNAc...) asparagine glycan. Residues 345 to 361 constitute an intramembrane region (pore-forming); that stretch reads FSWAFLALFRLMTQDYW. At 362–374 the chain is on the extracellular side; sequence ENLYQQTLRAAGK. Residues 375-400 traverse the membrane as a helical segment; it reads TYMIFFVVVIFLGSFYLINLILAVVA. The Cytoplasmic segment spans residues 401–742; it reads MAYEEQNQAN…FIYIIVMDPF (342 aa). Residues 459-469 show a composition bias toward low complexity; the sequence is SSSETSKLSSK. Disordered stretches follow at residues 459–517 and 563–610; these read SSSE…LGVE and GSET…PPML. A compositionally biased stretch (basic residues) spans 472-484; that stretch reads KERRNRRKKKNQK. Basic and acidic residues-rich tracts occupy residues 487–508 and 571–583; these read SSGE…ESIS and DEHS…ESRR. The stretch at 723–986 is one II repeat; that stretch reads CSPFWIKFKK…EEDTDANNLQ (264 aa). The chain crosses the membrane as a helical span at residues 743-759; the sequence is VDLAITICIVLNTLFMA. Over 760-768 the chain is Extracellular; sequence MEHHPMTEE. Residues 769 to 793 form a helical membrane-spanning segment; it reads FKNVLVVGNLVFTGIFAAEMVLKLI. Over 794–802 the chain is Cytoplasmic; that stretch reads AMDPYEYFQ. Residues 803–819 traverse the membrane as a helical segment; sequence VGWNVFDSLIVTLSLVE. Over 820-828 the chain is Extracellular; the sequence is LFLADVEGL. Residues 829 to 845 traverse the membrane as a helical segment; sequence SVLRSFRLLRVFKLAKS. At 846–862 the chain is on the cytoplasmic side; it reads WPTLNMLIKIIGNSVGP. Residues 863–885 traverse the membrane as a helical segment; the sequence is LGNLTLVLAIIVFIFAVVGMQLF. The Extracellular segment spans residues 886–912; that stretch reads GKSYKECVCKINDDCSLPRWHMNDFFH. Residues cysteine 894 and cysteine 900 are joined by a disulfide bond. Positions 913-925 form an intramembrane region, pore-forming; sequence SFLIVFRVLCGEW. Topologically, residues 926-937 are extracellular; that stretch reads IETMWDCMEVAG. A disulfide bridge connects residues cysteine 932 and cysteine 941. Residues 938–964 traverse the membrane as a helical segment; it reads QAMCLIVYMMVMVIGNLVVLNLFLALL. Residues 965 to 1184 are Cytoplasmic-facing; it reads LSSFSSDNLS…WWNIRKTCYR (220 aa). Residues 1087–1146 are disordered; the sequence is PIAPGESDLENMNTEELSSDSESEYSKERLNRSSSSECSTVDNALPGEGEEAEAEPVNSD. Positions 1118-1128 are enriched in polar residues; the sequence is RSSSSECSTVD. The span at 1134–1146 shows a compositional bias: acidic residues; it reads EGEEAEAEPVNSD. One copy of the III repeat lies at 1177-1485; that stretch reads NIRKTCYRIV…KKYYNAMKKL (309 aa). The helical transmembrane segment at 1185-1209 threads the bilayer; the sequence is IVEHSWFESFIVLMILLSSGALAFE. The Extracellular portion of the chain corresponds to 1210–1221; sequence DIYIEKKKTIKI. A helical membrane pass occupies residues 1222–1247; sequence ILEYADKIFTYIFILEMLLKWVAYGY. The Cytoplasmic segment spans residues 1248–1249; sequence KT. The helical transmembrane segment at 1250–1275 threads the bilayer; that stretch reads YFTNAWCWLDFLIVDVSLVTLVANTL. At 1276 to 1284 the chain is on the extracellular side; sequence GYSDLGPIK. A helical transmembrane segment spans residues 1285 to 1301; that stretch reads SLRTLRALRPLRALSRF. At 1302–1314 the chain is on the cytoplasmic side; it reads EGMRVVVNALIGA. The helical transmembrane segment at 1315–1339 threads the bilayer; sequence IPSIMNVLLVCLIFWLIFSIMGVNL. The Extracellular portion of the chain corresponds to 1340–1391; that stretch reads FAGKFYQCVNTTDDSRFPTKQVSNRSECFALMNGSQNVRWKNLKVNFDNVGL. Cysteine 1347 and cysteine 1367 are oxidised to a cystine. Residues asparagine 1349, asparagine 1363, and asparagine 1372 are each glycosylated (N-linked (GlcNAc...) asparagine). Residues 1392–1402 constitute an intramembrane region (pore-forming); the sequence is RYLSLLQVATF. Residues 1403 to 1428 are Extracellular-facing; it reads KGWMDIMYAAVDSVNVDQQPSYEHNL. A helical membrane pass occupies residues 1429–1454; it reads YMYIYFVIFIIFGSFFTLNLFIGVII. The Cytoplasmic portion of the chain corresponds to 1455-1511; sequence DNFNQQKKKLGGQDIFMTEEQKKYYNAMKKLGSKKPQKPIPRPGNKFQGCIFDLVTN. Phosphoserine; by PKC is present on serine 1487. The IV repeat unit spans residues 1494 to 1792; it reads IPRPGNKFQG…WEKFDPDATQ (299 aa). Residues 1512-1531 form a helical membrane-spanning segment; that stretch reads QAFDITIMILICLNMVTMMV. Over 1532-1542 the chain is Extracellular; that stretch reads EKEGQSDYMTD. Residues 1543-1564 traverse the membrane as a helical segment; it reads VLYWINVVFIILFTGECVLKLI. Topologically, residues 1565–1573 are cytoplasmic; that stretch reads SLRHYYFTI. A helical membrane pass occupies residues 1574–1595; sequence GWNIFDFVVVILSIVGMFLAEL. The Extracellular segment spans residues 1596 to 1604; sequence IETYFVSPT. Residues 1605–1624 form a helical membrane-spanning segment; the sequence is LFRVIRLARIGRILRLIKGA. At 1625-1637 the chain is on the cytoplasmic side; it reads KGIRTLLFALMMS. A helical transmembrane segment spans residues 1638–1660; that stretch reads LPALFNIGLLLFLVMFIYAIFGM. Over 1661–1683 the chain is Extracellular; it reads SNFAYVKKEAGINDMFNFETFGN. Residues 1684–1696 constitute an intramembrane region (pore-forming); it reads SMICLFQITTSAG. Topologically, residues 1697–1730 are extracellular; sequence WDGLLAPILNSAPPDCDPKKVHPGSSTEGDCGSP. The cysteines at positions 1712 and 1727 are disulfide-linked. The chain crosses the membrane as a helical span at residues 1731–1756; it reads SVGIFYFVSYIIISFLVVVNMYIAVI. Residues 1757–1984 are Cytoplasmic-facing; the sequence is LENFSVATEE…KGKDGKETKK (228 aa). Residues 1886-1915 enclose the IQ domain; that stretch reads EDVSATVIQRAYRRYRLRQNVKNISSIYIK. Residues 1924 to 1984 are disordered; that stretch reads PNKGDIVFDN…KGKDGKETKK (61 aa). The span at 1933–1956 shows a compositional bias: polar residues; sequence NVNSSSPEKTDATASTISPPSYDS. Positions 1958 to 1984 are enriched in basic and acidic residues; it reads TKPDKEKYEKDKTEKEDKGKDGKETKK.

This sequence belongs to the sodium channel (TC 1.A.1.10) family. Nav1.7/SCN9A subfamily. As to quaternary structure, the Nav1.7 voltage-gated sodium channel consists of an ion-conducting alpha subunit SCN9A which is functional on its own regulated by one or more beta-1 (SCN1B), beta-2 (SCN2B), beta-3 (SCN3B) and beta-4 (SCN4B) subunits. SCN1B and SCN3B are non-covalently associated with SCN9A. SCN2B and SCN4B are disulfide-linked to SCN9A. SCN1B regulates channel inactivation. Interacts with NEDD4 and NEDD4L; regulates Nav1.7 activity most probably through ubiquitination and subsequent endocytosis. Interacts with TMEM233; modulates the gating properties of NaV1.7. Post-translationally, phosphorylation at Ser-1487 by PKC in a highly conserved cytoplasmic loop increases peak sodium currents. Ubiquitinated by NEDD4L; which may promote its endocytosis. In terms of tissue distribution, expressed in the sciatic nerve, spinal cord, brainstem, cerebellum and cortex, but not expressed in the lung, skeletal and cardiac muscles, kidney and liver.

Its subcellular location is the cell membrane. The protein localises to the cell projection. It is found in the neuron projection. It localises to the axon. It catalyses the reaction Na(+)(in) = Na(+)(out). Functionally, pore-forming subunit of Nav1.7, a voltage-gated sodium (Nav) channel that directly mediates the depolarizing phase of action potentials in excitable membranes. Navs, also called VGSCs (voltage-gated sodium channels) or VDSCs (voltage-dependent sodium channels), operate by switching between closed and open conformations depending on the voltage difference across the membrane. In the open conformation they allow Na(+) ions to selectively pass through the pore, along their electrochemical gradient. The influx of Na(+) ions provokes membrane depolarization, initiating the propagation of electrical signals throughout cells and tissues. Nav1.7 plays a crucial role in controlling the excitability and action potential propagation from nociceptor neurons, thereby contributing to the sensory perception of pain. The sequence is that of Sodium channel protein type 9 subunit alpha from Oryctolagus cuniculus (Rabbit).